Consider the following 389-residue polypeptide: Putative zinc finger CCCH domain-containing protein 10 (389 aa).

Residues 1–11 (MANVSFTFDSQ) are compositionally biased toward polar residues. The interval 1-110 (MANVSFTFDS…QDRRGSESRM (110 aa)) is disordered. Composition is skewed to basic and acidic residues over residues 12–52 (EQNK…RVSE) and 86–110 (RSHE…ESRM). 2 C3H1-type zinc fingers span residues 131–157 (RPGE…YNHP) and 158–190 (PLQE…HPKE). The disordered stretch occupies residues 183-296 (CPFNHPKERD…ATATGKVSGK (114 aa)). Basic and acidic residues-rich tracts occupy residues 204-243 (PDLR…KEDA) and 251-284 (RPRD…RSSR).

The sequence is that of Putative zinc finger CCCH domain-containing protein 10 from Arabidopsis thaliana (Mouse-ear cress).